Here is a 135-residue protein sequence, read N- to C-terminus: ATP synthase epsilon chain (135 aa).

Belongs to the ATPase epsilon chain family. In terms of assembly, F-type ATPases have 2 components, CF(1) - the catalytic core - and CF(0) - the membrane proton channel. CF(1) has five subunits: alpha(3), beta(3), gamma(1), delta(1), epsilon(1). CF(0) has three main subunits: a, b and c.

The protein localises to the cell inner membrane. In terms of biological role, produces ATP from ADP in the presence of a proton gradient across the membrane. This chain is ATP synthase epsilon chain, found in Rhizobium johnstonii (strain DSM 114642 / LMG 32736 / 3841) (Rhizobium leguminosarum bv. viciae).